The sequence spans 72 residues: Translational regulator CsrA (72 aa).

Belongs to the CsrA/RsmA family. In terms of assembly, homodimer; the beta-strands of each monomer intercalate to form a hydrophobic core, while the alpha-helices form wings that extend away from the core.

The protein localises to the cytoplasm. In terms of biological role, a translational regulator that binds mRNA to regulate translation initiation and/or mRNA stability. Usually binds in the 5'-UTR at or near the Shine-Dalgarno sequence preventing ribosome-binding, thus repressing translation. Its main target seems to be the major flagellin gene, while its function is anatagonized by FliW. In Clostridium botulinum (strain ATCC 19397 / Type A), this protein is Translational regulator CsrA.